We begin with the raw amino-acid sequence, 343 residues long: Protein rax1 (343 aa).

At 1–235 (MASAPRVSEV…NLNPLTCTGR (235 aa)) the chain is on the cytoplasmic side. The 120-residue stretch at 109-228 (ELSNEQTINS…LNHKFKHNLN (120 aa)) folds into the RGS domain. Residues 236–256 (FIIGYVSTFAAYWLGFCGIFL) traverse the membrane as a helical segment. The Extracellular portion of the chain corresponds to 257 to 263 (DYSRRKR). Residues 264–284 (VWTLLPFAFGFYNLICTWSKH) traverse the membrane as a helical segment. Residues 285–317 (DPVLALLGYSEVKPFHYEKVLQPSIRLSLNRRA) are Cytoplasmic-facing. A helical transmembrane segment spans residues 318–338 (IFVLSIIVLIVGANTAIFSCV). Topologically, residues 339 to 343 (PSIRL) are extracellular.

Its subcellular location is the cell membrane. The protein localises to the endoplasmic reticulum membrane. May be involved in cell polarization and division. This is Protein rax1 (rax1) from Schizosaccharomyces pombe (strain 972 / ATCC 24843) (Fission yeast).